The sequence spans 193 residues: Anthranilate synthase component 2 (193 aa).

Residues 3–193 (NILFLDNFDS…QQSIEWLLNR (191 aa)) form the Glutamine amidotransferase type-1 domain. Residue 57-59 (GPG) participates in L-glutamine binding. Cys-84 serves as the catalytic Nucleophile; for GATase activity. Residues Gln-88 and 134 to 135 (SL) contribute to the L-glutamine site. Residues His-170 and Glu-172 each act as for GATase activity in the active site.

Heterotetramer consisting of two non-identical subunits: a beta subunit (TrpG) and a large alpha subunit (TrpE).

The catalysed reaction is chorismate + L-glutamine = anthranilate + pyruvate + L-glutamate + H(+). Its pathway is amino-acid biosynthesis; L-tryptophan biosynthesis; L-tryptophan from chorismate: step 1/5. Part of a heterotetrameric complex that catalyzes the two-step biosynthesis of anthranilate, an intermediate in the biosynthesis of L-tryptophan. In the first step, the glutamine-binding beta subunit (TrpG) of anthranilate synthase (AS) provides the glutamine amidotransferase activity which generates ammonia as a substrate that, along with chorismate, is used in the second step, catalyzed by the large alpha subunit of AS (TrpE) to produce anthranilate. In the absence of TrpG, TrpE can synthesize anthranilate directly from chorismate and high concentrations of ammonia. The sequence is that of Anthranilate synthase component 2 (trpG) from Haemophilus influenzae (strain ATCC 51907 / DSM 11121 / KW20 / Rd).